The chain runs to 161 residues: Allophycocyanin beta chain (161 aa).

At Asn71 the chain carries N4-methylasparagine. Cys81 is a binding site for (2R,3E)-phycocyanobilin.

It belongs to the phycobiliprotein family. Heterodimer of an alpha and a beta chain. Post-translationally, contains one covalently linked phycocyanobilin chromophore.

The protein resides in the plastid. The protein localises to the cyanelle thylakoid membrane. Light-harvesting photosynthetic bile pigment-protein from the phycobiliprotein complex. Allophycocyanin has a maximum absorption at approximately 650 nanometers. The polypeptide is Allophycocyanin beta chain (apcB) (Cyanophora paradoxa).